A 763-amino-acid polypeptide reads, in one-letter code: Phosphoglycerol transferase I (763 aa).

4 consecutive transmembrane segments (helical) span residues Leu4 to Trp19, Trp26 to Ser48, Tyr76 to Leu98, and Pro105 to Ala127.

The protein belongs to the OpgB family.

Its subcellular location is the cell inner membrane. The catalysed reaction is a phosphatidylglycerol + a membrane-derived-oligosaccharide D-glucose = a 1,2-diacyl-sn-glycerol + a membrane-derived-oligosaccharide 6-(glycerophospho)-D-glucose.. It functions in the pathway glycan metabolism; osmoregulated periplasmic glucan (OPG) biosynthesis. Transfers a phosphoglycerol residue from phosphatidylglycerol to the membrane-bound nascent glucan backbones. The polypeptide is Phosphoglycerol transferase I (Shigella flexneri).